The following is a 365-amino-acid chain: UDP-N-acetylglucosamine--N-acetylmuramyl-(pentapeptide) pyrophosphoryl-undecaprenol N-acetylglucosamine transferase (365 aa).

UDP-N-acetyl-alpha-D-glucosamine is bound by residues 13-15 (TGG), Asn-125, Arg-165, Ser-192, and Gln-293.

It belongs to the glycosyltransferase 28 family. MurG subfamily.

It localises to the cell inner membrane. It catalyses the reaction di-trans,octa-cis-undecaprenyl diphospho-N-acetyl-alpha-D-muramoyl-L-alanyl-D-glutamyl-meso-2,6-diaminopimeloyl-D-alanyl-D-alanine + UDP-N-acetyl-alpha-D-glucosamine = di-trans,octa-cis-undecaprenyl diphospho-[N-acetyl-alpha-D-glucosaminyl-(1-&gt;4)]-N-acetyl-alpha-D-muramoyl-L-alanyl-D-glutamyl-meso-2,6-diaminopimeloyl-D-alanyl-D-alanine + UDP + H(+). The protein operates within cell wall biogenesis; peptidoglycan biosynthesis. In terms of biological role, cell wall formation. Catalyzes the transfer of a GlcNAc subunit on undecaprenyl-pyrophosphoryl-MurNAc-pentapeptide (lipid intermediate I) to form undecaprenyl-pyrophosphoryl-MurNAc-(pentapeptide)GlcNAc (lipid intermediate II). The polypeptide is UDP-N-acetylglucosamine--N-acetylmuramyl-(pentapeptide) pyrophosphoryl-undecaprenol N-acetylglucosamine transferase (Ruegeria sp. (strain TM1040) (Silicibacter sp.)).